A 429-amino-acid chain; its full sequence is MCPGALWVALPLLSLLAGSLQGKPLQSWGRGSAGGNAHSPLGVPGGGLPEHTFNLKMFLENVKVDFLRSLNLSGVPSQDKTRVEPPQYMIDLYNRYTSDKSTTPASNIVRSFSMEDAISITATEDFPFQKHILLFNISIPRHEQITRAELRLYVSCQNHVDPSHDLKGSVVIYDVLDGTDAWDSATETKTFLVSQDIQDEGWETLEVSSAVKRWVRSDSTKSKNKLEVTVESHRKGCDTLDISVPPGSRNLPFFVVFSNDHSSGTKETRLELREMISHEQESVLKKLSKDGSTEAGESSHEEDTDGHVAAGSTLARRKRSAGAGSHCQKTSLRVNFEDIGWDSWIIAPKEYEAYECKGGCFFPLADDVTPTKHAIVQTLVHLKFPTKVGKACCVPTKLSPISVLYKDDMGVPTLKYHYEGMSVAECGCR.

A signal peptide spans 1-22; the sequence is MCPGALWVALPLLSLLAGSLQG. A propeptide spanning residues 23–319 is cleaved from the precursor; sequence KPLQSWGRGS…AGSTLARRKR (297 aa). Residues asparagine 71 and asparagine 136 are each glycosylated (N-linked (GlcNAc...) asparagine). The span at 283–301 shows a compositional bias: basic and acidic residues; sequence VLKKLSKDGSTEAGESSHE. The tract at residues 283 to 308 is disordered; the sequence is VLKKLSKDGSTEAGESSHEEDTDGHV. Disulfide bonds link cysteine 327–cysteine 393, cysteine 356–cysteine 426, and cysteine 360–cysteine 428. Residues 402 to 416 form an interaction with ENG region; it reads SVLYKDDMGVPTLKY.

This sequence belongs to the TGF-beta family. In terms of assembly, homodimer; disulfide-linked. Detected in extracellular fluid as mature homodimer, and in complex with its propeptide. Interacts with ACVRL1, BMPR2 and ACVR2B with high affinity (in vitro). Identified in a complex with ACVRL1 and ACVR2B. Has ten times lower affinity for ACVR2A (in vitro). Interacts with ENG, forming a heterotetramer with a 2:2 stoichiometry. Can form a heteromeric complex with ENG and ACVRL1. Interacts with type I receptor ACVR1. Post-translationally, a reversible disulfide bond can be formed between the two subunits in the homodimer; this has no effect on GDF2 activity. Detected in blood plasma (at protein level).

The protein resides in the secreted. Potent circulating inhibitor of angiogenesis. Signals through the type I activin receptor ACVRL1 but not other Alks. Signaling through SMAD1 in endothelial cells requires TGF-beta coreceptor endoglin/ENG. The chain is Growth/differentiation factor 2 (GDF2) from Homo sapiens (Human).